The following is a 117-amino-acid chain: Biogenesis of lysosome-related organelles complex 1 subunit BLS1 (117 aa).

The segment at 97-117 (EGKAQDTEQAPGKGDRIFRSD) is disordered.

It belongs to the BLOC1S1 family. In terms of assembly, component of the biogenesis of lysosome-related organelles complex-1 (BLOC-1).

It localises to the endosome. Functionally, component of the biogenesis of lysosome-related organelles complex-1 (BLOC-1), a complex involved in endosomal cargo sorting. In Eremothecium gossypii (strain ATCC 10895 / CBS 109.51 / FGSC 9923 / NRRL Y-1056) (Yeast), this protein is Biogenesis of lysosome-related organelles complex 1 subunit BLS1 (BLS1).